A 263-amino-acid chain; its full sequence is Small ribosomal subunit protein eS4, Y isoform 2 (263 aa).

An S4 RNA-binding domain is found at 42-104 (LPLIVFLRNR…TGEHFRLVYD (63 aa)).

The protein belongs to the eukaryotic ribosomal protein eS4 family.

This is Small ribosomal subunit protein eS4, Y isoform 2 (RPS4Y2) from Pan troglodytes (Chimpanzee).